The primary structure comprises 569 residues: Acetate/butyrate--CoA ligase AAE7, peroxisomal (569 aa).

A Microbody targeting signal motif is present at residues 567–569 (SRL).

This sequence belongs to the ATP-dependent AMP-binding enzyme family. In terms of tissue distribution, expressed in roots, leaves, stems, flowers and developing seeds.

The protein resides in the peroxisome. It catalyses the reaction acetate + ATP + CoA = acetyl-CoA + AMP + diphosphate. It carries out the reaction a medium-chain fatty acid + ATP + CoA = a medium-chain fatty acyl-CoA + AMP + diphosphate. Its function is as follows. Peroxisomal acetate/butyrate--CoA ligase that is probably involved in the activation of exogenous acetate for entry into the glyoxylate cycle. May play a role to prevent carbon loss from peroxisomes during lipid mobilization. In vitro, is active with both acetate and butyrate. The protein is Acetate/butyrate--CoA ligase AAE7, peroxisomal (AAE7) of Arabidopsis thaliana (Mouse-ear cress).